The chain runs to 448 residues: Methionine aminopeptidase 2 (448 aa).

The segment at 1-47 (MTSSVDKVSQKVADVKLGSSKSTKNNKSKGKGKSNKNQVVEDDDEDD) is disordered. The segment covering 24-34 (KNNKSKGKGKS) has biased composition (basic residues). Residue His-198 participates in substrate binding. Positions 218, 229, and 298 each coordinate a divalent metal cation. A substrate-binding site is contributed by His-306. Residues Glu-331 and Glu-429 each coordinate a divalent metal cation.

Belongs to the peptidase M24A family. Methionine aminopeptidase eukaryotic type 2 subfamily. The cofactor is Co(2+). Zn(2+) serves as cofactor. Mn(2+) is required as a cofactor. Requires Fe(2+) as cofactor.

It is found in the cytoplasm. It catalyses the reaction Release of N-terminal amino acids, preferentially methionine, from peptides and arylamides.. Functionally, cotranslationally removes the N-terminal methionine from nascent proteins. The N-terminal methionine is often cleaved when the second residue in the primary sequence is small and uncharged (Met-Ala-, Cys, Gly, Pro, Ser, Thr, or Val). In Komagataella phaffii (strain GS115 / ATCC 20864) (Yeast), this protein is Methionine aminopeptidase 2.